Here is a 179-residue protein sequence, read N- to C-terminus: Large ribosomal subunit protein uL6 (179 aa).

It belongs to the universal ribosomal protein uL6 family. As to quaternary structure, part of the 50S ribosomal subunit.

In terms of biological role, this protein binds to the 23S rRNA, and is important in its secondary structure. It is located near the subunit interface in the base of the L7/L12 stalk, and near the tRNA binding site of the peptidyltransferase center. The sequence is that of Large ribosomal subunit protein uL6 from Mycobacterium leprae (strain Br4923).